Here is a 423-residue protein sequence, read N- to C-terminus: D-tagatose-1,6-bisphosphate aldolase subunit GatZ (423 aa).

It belongs to the GatZ/KbaZ family. GatZ subfamily. Forms a complex with GatY.

Its pathway is carbohydrate metabolism; D-tagatose 6-phosphate degradation; D-glyceraldehyde 3-phosphate and glycerone phosphate from D-tagatose 6-phosphate: step 2/2. Its function is as follows. Component of the tagatose-1,6-bisphosphate aldolase GatYZ that is required for full activity and stability of the Y subunit. Could have a chaperone-like function for the proper and stable folding of GatY. When expressed alone, GatZ does not show any aldolase activity. Is involved in the catabolism of galactitol. The chain is D-tagatose-1,6-bisphosphate aldolase subunit GatZ from Salmonella typhimurium (strain LT2 / SGSC1412 / ATCC 700720).